A 311-amino-acid chain; its full sequence is MEFSTQQTPFLSFNREQWAELRKSVPLKLTEQDLKPLLGFNEDLSLDEVSTIYLPLTRLINYYIDENLHRQTVLHRFLGRNNAKTPYIISIAGSVAVGKSTSARILQSLLSHWPTERKVDLITTDGFLYPLNKLKQDNLLQKKGFPVSYDTPKLIRFLADVKSGKSNVTAPIYSHLTYDIIPDKFDVVDKPDILILEGLNVLQTGNNKTDQTFVSDFVDFSIYVDAEEKLLKEWYIKRFLKFRESAFNDPNSYFKHYASLSKEEAIATASKIWDEINGLNLNQNILPTRERANLILKKGHNHQVELIKLRK.

Position 93 to 100 (93 to 100 (GSVAVGKS)) interacts with ATP.

Belongs to the prokaryotic pantothenate kinase family.

It localises to the cytoplasm. It catalyses the reaction (R)-pantothenate + ATP = (R)-4'-phosphopantothenate + ADP + H(+). It participates in cofactor biosynthesis; coenzyme A biosynthesis; CoA from (R)-pantothenate: step 1/5. This chain is Pantothenate kinase (coaA), found in Haemophilus influenzae (strain ATCC 51907 / DSM 11121 / KW20 / Rd).